A 992-amino-acid chain; its full sequence is Meckelin (992 aa).

The N-terminal stretch at 1 to 36 is a signal peptide; the sequence is MVTRTRPVAAMAVRSRSSSRTGTAYLLLVLCEVSWA. The tract at residues 37–280 is cysteine-rich; it reads QIFSFPFRRP…FHYIFESTAG (244 aa). At 37–516 the chain is on the extracellular side; it reads QIFSFPFRRP…SVKYEMNQGD (480 aa). 12 cysteine pairs are disulfide-bonded: Cys-49–Cys-62, Cys-65–Cys-78, Cys-80–Cys-97, Cys-100–Cys-114, Cys-117–Cys-127, Cys-129–Cys-150, Cys-153–Cys-170, Cys-173–Cys-184, Cys-186–Cys-197, Cys-237–Cys-246, Cys-253–Cys-268, and Cys-354–Cys-375. A glycan (N-linked (GlcNAc...) asparagine) is linked at Asn-242. A helical transmembrane segment spans residues 517 to 545; it reads ASVHTDIALGVLGGLAVLSSLLKTAGWKR. Over 546–555 the chain is Cytoplasmic; the sequence is RVGSPMIDLQ. The helical transmembrane segment at 556 to 587 threads the bilayer; it reads TVMKFLLYYAGDLANVFFIITVGTGLYWLIFF. Topologically, residues 588-600 are extracellular; that stretch reads KAQKSVSVLLPMP. A helical transmembrane segment spans residues 601 to 628; that stretch reads VQEERFVTYVGCAFAMKALQFLHKFISQ. Residues 629-667 are Cytoplasmic-facing; the sequence is ISIDIFFIDWERPKGKVLKAVEGEGGVRSATVPVSIWRT. The helical intramembrane region spans 668-676; the sequence is YFVANEWNE. Residues 668 to 698 traverse the membrane as a discontinuously helical segment; the sequence is YFVANEWNEIQTVRKINPLFQVLTTLFFLEV. The stretch at 677–685 is an intramembrane region; that stretch reads IQTVRKINP. An intramembrane region (helical) is located at residues 686 to 698; the sequence is LFQVLTTLFFLEV. At 699–728 the chain is on the extracellular side; that stretch reads VGFKNLALMDSSSSLSRNPSDYTAPYSRIL. The helical intramembrane region spans 729 to 754; that stretch reads RYAVATAIWLVIGIIQVVFFAAFYER. Residues 729–768 traverse the membrane as a discontinuously helical segment; the sequence is RYAVATAIWLVIGIIQVVFFAAFYERFIEDKIRQFVDLCS. The stretch at 755–759 is an intramembrane region; that stretch reads FIEDK. Residues 760–768 constitute an intramembrane region (helical); sequence IRQFVDLCS. Residues 769–923 lie on the Cytoplasmic side of the membrane; sequence MSNVSVFLLS…SIFYNDEGHS (155 aa). The helical intramembrane region spans 924–926; it reads FSS. A discontinuously helical transmembrane segment spans residues 924-949; the sequence is FSSVLYYGNEATLLIFDLLFFCVVDL. Residues 927–933 lie within the membrane without spanning it; that stretch reads VLYYGNE. The segment at residues 934-949 is an intramembrane region (helical); it reads ATLLIFDLLFFCVVDL. Residues 950-954 are Extracellular-facing; that stretch reads ACQDF. A helical membrane pass occupies residues 955–982; it reads VLASFLTYLQQEIFRFIRNTVGQKNLAT. The Cytoplasmic segment spans residues 983 to 992; that stretch reads KTLVDERFLI.

As to quaternary structure, homodimer. Part of the tectonic-like complex (also named B9 complex). Interacts with DNAJB9, DNAJC10 and mutated SFTPC. Interacts with SYNE2 during the early establishment of cell polarity. Interacts (via C-terminus) with FLNA. Interacts with TMEM218. Interacts with WNT5A. Interacts with ROR2.

It localises to the cell membrane. The protein resides in the endoplasmic reticulum membrane. Its subcellular location is the cytoplasm. It is found in the cytoskeleton. The protein localises to the cilium basal body. In terms of biological role, part of the tectonic-like complex which is required for tissue-specific ciliogenesis and may regulate ciliary membrane composition. Involved in centrosome migration to the apical cell surface during early ciliogenesis. Required for ciliary structure and function, including a role in regulating length and appropriate number through modulating centrosome duplication. Is a key regulator of stereociliary bundle orientation. Required for epithelial cell branching morphology. Essential for endoplasmic reticulum-associated degradation (ERAD) of surfactant protein C (sftpc). Involved in the negative regulation of canonical Wnt signaling, and activation of the non-canonical cascade stimulated by WNT5A. In non-canonical Wnt signaling, it may act as ROR2 coreceptor. The polypeptide is Meckelin (Tmem67) (Mus musculus (Mouse)).